A 397-amino-acid polypeptide reads, in one-letter code: DNA-binding protein (397 aa).

Positions 116 and 118 each coordinate Zn(2+). A flexible loop region spans residues 129–161; the sequence is IEMAATSESGVAALKEGRGAVEINRWGRQVVKI. 6 residues coordinate Zn(2+): Cys-169, Cys-185, Cys-225, Cys-227, Cys-276, and Cys-289. Residues 335–397 form a C-terminal arm, DBP binding region; that stretch reads ALLPEGSVNE…IVLESSEEDE (63 aa). The segment at 338-397 is disordered; it reads PEGSVNEDENPFGLDNSEDEEEVVPPSPPSPARKRTRTTVAEVHHKKKKKIVLESSEEDE. Residues 342 to 360 show a composition bias toward acidic residues; it reads VNEDENPFGLDNSEDEEEV.

It belongs to the adenoviridae E2A DNA-binding protein family. As to quaternary structure, homomultimerizes on viral ssDNA bound to pTP. Forms a initiation complex with viral polymerase, pTP and hosts NFIA and POU2F1/OCT1. Interacts with host SRCAP.

The protein resides in the host nucleus. Plays a role in the elongation phase of viral strand displacement replication by unwinding the template in an ATP-independent fashion, employing its capacity to form multimers. Also enhances the rate of initiation. Released from template upon second strand synthesis. Assembles in complex with viral pTP, viral pol, host NFIA and host POU2F1/OCT1 on viral origin of replication. Covers the whole ssDNA genome during synthesis. The complementary strand synthesis induces its relese from DNA template. May inhibit cellular transcription mediated by the interaction between host SRCAP and CBP. This Snake adenovirus serotype 1 (SnAdV-1) protein is DNA-binding protein.